The chain runs to 248 residues: Cytochrome c oxidase subunit 2 (248 aa).

Topologically, residues 1 to 43 are mitochondrial intermembrane; sequence MTNLLNNWLIINQFGYDLPEPWQLGLQDAAHPVMEEIIFFHDQ. The chain crosses the membrane as a helical span at residues 44-65; sequence VMFILIIIITTVLWLIVKALSG. Topologically, residues 66–79 are mitochondrial matrix; it reads KAYHRYLVDGTLLE. The chain crosses the membrane as a helical span at residues 80 to 99; that stretch reads IIWTIVPAIILILIAFPSLK. Topologically, residues 100–248 are mitochondrial intermembrane; it reads LLYLMDEVMD…INWVLSGSDE (149 aa). H180, C215, E217, C219, H223, and M226 together coordinate Cu cation. E217 provides a ligand contact to Mg(2+).

This sequence belongs to the cytochrome c oxidase subunit 2 family. In terms of assembly, component of the cytochrome c oxidase (complex IV, CIV), a multisubunit enzyme composed of a catalytic core of 3 subunits and several supernumerary subunits. The complex exists as a monomer or a dimer and forms supercomplexes (SCs) in the inner mitochondrial membrane with ubiquinol-cytochrome c oxidoreductase (cytochrome b-c1 complex, complex III, CIII). Requires Cu cation as cofactor.

The protein resides in the mitochondrion inner membrane. The enzyme catalyses 4 Fe(II)-[cytochrome c] + O2 + 8 H(+)(in) = 4 Fe(III)-[cytochrome c] + 2 H2O + 4 H(+)(out). Functionally, component of the cytochrome c oxidase, the last enzyme in the mitochondrial electron transport chain which drives oxidative phosphorylation. The respiratory chain contains 3 multisubunit complexes succinate dehydrogenase (complex II, CII), ubiquinol-cytochrome c oxidoreductase (cytochrome b-c1 complex, complex III, CIII) and cytochrome c oxidase (complex IV, CIV), that cooperate to transfer electrons derived from NADH and succinate to molecular oxygen, creating an electrochemical gradient over the inner membrane that drives transmembrane transport and the ATP synthase. Cytochrome c oxidase is the component of the respiratory chain that catalyzes the reduction of oxygen to water. Electrons originating from reduced cytochrome c in the intermembrane space (IMS) are transferred via the dinuclear copper A center (CU(A)) of subunit 2 and heme A of subunit 1 to the active site in subunit 1, a binuclear center (BNC) formed by heme A3 and copper B (CU(B)). The BNC reduces molecular oxygen to 2 water molecules using 4 electrons from cytochrome c in the IMS and 4 protons from the mitochondrial matrix. The chain is Cytochrome c oxidase subunit 2 (COII) from Metridium senile (Brown sea anemone).